The primary structure comprises 138 residues: Acidic phospholipase A2 Cvv-E6h (138 aa).

Positions 1-16 (MRTLWIVAVLLLGVEG) are cleaved as a signal peptide. 7 disulfides stabilise this stretch: Cys42–Cys131, Cys44–Cys60, Cys59–Cys111, Cys65–Cys138, Cys66–Cys104, Cys73–Cys97, and Cys91–Cys102. The Ca(2+) site is built by Tyr43, Gly45, and Gly47. The active site involves His63. Asp64 provides a ligand contact to Ca(2+). Residue Asp105 is part of the active site.

This sequence belongs to the phospholipase A2 family. Group II subfamily. D49 sub-subfamily. The cofactor is Ca(2+). Expressed by the venom gland.

The protein localises to the secreted. It catalyses the reaction a 1,2-diacyl-sn-glycero-3-phosphocholine + H2O = a 1-acyl-sn-glycero-3-phosphocholine + a fatty acid + H(+). Snake venom phospholipase A2 (PLA2) that shows very low inhibition of ADP-induced platelet aggregation in platelet-rich plasma of human, rabbit and guinea pig. In vivo, shows efficient edema-inducing activities in rat paws. PLA2 catalyzes the calcium-dependent hydrolysis of the 2-acyl groups in 3-sn-phosphoglycerides. This chain is Acidic phospholipase A2 Cvv-E6h, found in Crotalus viridis viridis (Prairie rattlesnake).